Reading from the N-terminus, the 327-residue chain is Phenylalanine--tRNA ligase alpha subunit (327 aa).

Glu-252 lines the Mg(2+) pocket.

The protein belongs to the class-II aminoacyl-tRNA synthetase family. Phe-tRNA synthetase alpha subunit type 1 subfamily. In terms of assembly, tetramer of two alpha and two beta subunits. It depends on Mg(2+) as a cofactor.

It localises to the cytoplasm. The catalysed reaction is tRNA(Phe) + L-phenylalanine + ATP = L-phenylalanyl-tRNA(Phe) + AMP + diphosphate + H(+). The sequence is that of Phenylalanine--tRNA ligase alpha subunit from Vibrio cholerae serotype O1 (strain ATCC 39541 / Classical Ogawa 395 / O395).